Here is a 356-residue protein sequence, read N- to C-terminus: 1-deoxy-D-xylulose 5-phosphate reductoisomerase (356 aa).

Residues threonine 7, glycine 8, serine 9, isoleucine 10, glycine 31, asparagine 33, and asparagine 111 each coordinate NADPH. Position 112 (lysine 112) interacts with 1-deoxy-D-xylulose 5-phosphate. Glutamate 113 lines the NADPH pocket. Aspartate 131 provides a ligand contact to Mn(2+). The 1-deoxy-D-xylulose 5-phosphate site is built by serine 132, glutamate 133, serine 155, and histidine 178. Glutamate 133 is a binding site for Mn(2+). Glycine 184 contributes to the NADPH binding site. 1-deoxy-D-xylulose 5-phosphate-binding residues include serine 191, asparagine 196, lysine 197, and glutamate 200. Glutamate 200 lines the Mn(2+) pocket.

Belongs to the DXR family. Mg(2+) serves as cofactor. It depends on Mn(2+) as a cofactor.

It carries out the reaction 2-C-methyl-D-erythritol 4-phosphate + NADP(+) = 1-deoxy-D-xylulose 5-phosphate + NADPH + H(+). It participates in isoprenoid biosynthesis; isopentenyl diphosphate biosynthesis via DXP pathway; isopentenyl diphosphate from 1-deoxy-D-xylulose 5-phosphate: step 1/6. In terms of biological role, catalyzes the NADPH-dependent rearrangement and reduction of 1-deoxy-D-xylulose-5-phosphate (DXP) to 2-C-methyl-D-erythritol 4-phosphate (MEP). The protein is 1-deoxy-D-xylulose 5-phosphate reductoisomerase of Campylobacter jejuni subsp. doylei (strain ATCC BAA-1458 / RM4099 / 269.97).